A 291-amino-acid polypeptide reads, in one-letter code: N-acetylmannosamine kinase (291 aa).

Residues 5–12 (AIDIGGTK) and 132–139 (GVGGGVVS) each bind ATP. Residues His156, Cys166, Cys168, and Cys173 each contribute to the Zn(2+) site.

Belongs to the ROK (NagC/XylR) family. NanK subfamily. In terms of assembly, homodimer.

The enzyme catalyses an N-acyl-D-mannosamine + ATP = an N-acyl-D-mannosamine 6-phosphate + ADP + H(+). Its pathway is amino-sugar metabolism; N-acetylneuraminate degradation; D-fructose 6-phosphate from N-acetylneuraminate: step 2/5. Functionally, catalyzes the phosphorylation of N-acetylmannosamine (ManNAc) to ManNAc-6-P. The chain is N-acetylmannosamine kinase from Escherichia coli O157:H7.